Reading from the N-terminus, the 67-residue chain is Tachystatin-A2 (67 aa).

A signal peptide spans methionine 1–alanine 23. Cystine bridges form between cysteine 27–cysteine 47, cysteine 34–cysteine 52, and cysteine 46–cysteine 64.

As to expression, granular hemocytes, small secretory granules.

The protein resides in the secreted. Its function is as follows. Exhibits stronger antimicrobial activity against the Gram-positive bacteria (S.aureus (IC(50)=4.2 ug/ml)) and fungi (C.albicans (IC(50)=3.0 ug/ml) and P.pastoris (IC(50)=0.5 ug/ml)) than Gram-negative bacteria (E.coli (IC(50)=25 ug/ml)). Binds to chitin (8.4 uM are required to obtain 50% of binding). Does not cause hemolysis on sheep erythrocytes. Has no blocking activity on the P-type calcium channel. Has also been shown to weakly inhibit Kv1.2/KCNA2 voltage-gated potassium channels and TRPV1 receptors. This is Tachystatin-A2 from Tachypleus tridentatus (Japanese horseshoe crab).